We begin with the raw amino-acid sequence, 177 residues long: ATP-dependent protease subunit HslV (177 aa).

The active site involves Thr-6. Na(+) is bound by residues Ala-162, Cys-165, and Thr-168.

This sequence belongs to the peptidase T1B family. HslV subfamily. In terms of assembly, a double ring-shaped homohexamer of HslV is capped on each side by a ring-shaped HslU homohexamer. The assembly of the HslU/HslV complex is dependent on binding of ATP.

The protein resides in the cytoplasm. It carries out the reaction ATP-dependent cleavage of peptide bonds with broad specificity.. Its activity is regulated as follows. Allosterically activated by HslU binding. In terms of biological role, protease subunit of a proteasome-like degradation complex believed to be a general protein degrading machinery. The protein is ATP-dependent protease subunit HslV of Lawsonia intracellularis (strain PHE/MN1-00).